The sequence spans 531 residues: tRNA(Ile)-lysidine synthase (531 aa).

32–37 (SGGMDS) contacts ATP.

Belongs to the tRNA(Ile)-lysidine synthase family.

It is found in the cytoplasm. It catalyses the reaction cytidine(34) in tRNA(Ile2) + L-lysine + ATP = lysidine(34) in tRNA(Ile2) + AMP + diphosphate + H(+). Ligates lysine onto the cytidine present at position 34 of the AUA codon-specific tRNA(Ile) that contains the anticodon CAU, in an ATP-dependent manner. Cytidine is converted to lysidine, thus changing the amino acid specificity of the tRNA from methionine to isoleucine. The polypeptide is tRNA(Ile)-lysidine synthase (Blochmanniella floridana).